A 157-amino-acid polypeptide reads, in one-letter code: Phosphopantetheine adenylyltransferase (157 aa).

Substrate is bound at residue threonine 10. ATP contacts are provided by residues 10–11 and histidine 18; that span reads TF. Residues lysine 42, leucine 74, and arginine 88 each contribute to the substrate site. ATP is bound by residues 89–91, glutamate 99, and 124–130; these read GLR and NAFISSS.

This sequence belongs to the bacterial CoaD family. Homohexamer. Requires Mg(2+) as cofactor.

It is found in the cytoplasm. The enzyme catalyses (R)-4'-phosphopantetheine + ATP + H(+) = 3'-dephospho-CoA + diphosphate. The protein operates within cofactor biosynthesis; coenzyme A biosynthesis; CoA from (R)-pantothenate: step 4/5. Its activity is regulated as follows. Tightly binds to CoA, which is presumably a feedback inhibitor. Potently inhibited by D-amethopterin, which simultaneously occupies the 4'-phosphopantetheine- and ATP-binding sites; following treatment with D-amethopterin, H.pylori exhibits morphological characteristics associated with cell death, showing that D-amethopterin displays antimicrobial activity. Functionally, reversibly transfers an adenylyl group from ATP to 4'-phosphopantetheine, yielding dephospho-CoA (dPCoA) and pyrophosphate. The protein is Phosphopantetheine adenylyltransferase of Helicobacter pylori (strain ATCC 700392 / 26695) (Campylobacter pylori).